We begin with the raw amino-acid sequence, 208 residues long: Large ribosomal subunit protein uL3 (208 aa).

The disordered stretch occupies residues 123–147 (RHGQSRGPMAHGSRYHRRPGSMGPV).

This sequence belongs to the universal ribosomal protein uL3 family. Part of the 50S ribosomal subunit. Forms a cluster with proteins L14 and L19.

Functionally, one of the primary rRNA binding proteins, it binds directly near the 3'-end of the 23S rRNA, where it nucleates assembly of the 50S subunit. The chain is Large ribosomal subunit protein uL3 from Streptococcus uberis (strain ATCC BAA-854 / 0140J).